Here is a 245-residue protein sequence, read N- to C-terminus: Uridylate kinase (245 aa).

20-23 (KLSG) is a binding site for ATP. Residue Gly-60 coordinates UMP. The ATP site is built by Gly-61 and Arg-65. Residues Asp-80 and 141-148 (AGLPYFST) contribute to the UMP site. 2 residues coordinate ATP: Tyr-175 and Asp-178.

It belongs to the UMP kinase family. As to quaternary structure, homohexamer.

Its subcellular location is the cytoplasm. It catalyses the reaction UMP + ATP = UDP + ADP. Its pathway is pyrimidine metabolism; CTP biosynthesis via de novo pathway; UDP from UMP (UMPK route): step 1/1. Its activity is regulated as follows. Inhibited by UTP. Functionally, catalyzes the reversible phosphorylation of UMP to UDP. The protein is Uridylate kinase of Arthrobacter sp. (strain FB24).